A 1098-amino-acid polypeptide reads, in one-letter code: Contactin-5 (1098 aa).

A signal peptide spans 1–23 (MASCWRLILFLSVTRWLSDYSEA). Ig-like C2-type domains lie at 98 to 189 (PVFV…ATLQ), 195 to 281 (NFSG…RVLS), 299 to 384 (PKIE…GQLQ), 389 to 473 (PHWV…AELK), 479 to 568 (PSFE…LSVK), and 570 to 659 (PTRI…DSVS). The cysteines at positions 122 and 172 are disulfide-linked. 2 N-linked (GlcNAc...) asparagine glycosylation sites follow: asparagine 137 and asparagine 195. Cystine bridges form between cysteine 216-cysteine 268 and cysteine 321-cysteine 368. Asparagine 396, asparagine 448, and asparagine 539 each carry an N-linked (GlcNAc...) asparagine glycan. 3 disulfide bridges follow: cysteine 410-cysteine 457, cysteine 502-cysteine 550, and cysteine 592-cysteine 649. Fibronectin type-III domains are found at residues 672-770 (PPGV…TNEA), 775-872 (APSN…SAEG), 877-971 (APTD…TKRH), and 976-1066 (PPGN…SYSG). N-linked (GlcNAc...) asparagine glycosylation is found at asparagine 778, asparagine 815, and asparagine 930. The segment at 956–982 (GYGPPSREASTTTKRHPPREPPGNLRW) is disordered. A glycan (N-linked (GlcNAc...) asparagine) is linked at asparagine 1001. Residue serine 1071 is the site of GPI-anchor amidated serine attachment. The propeptide at 1072 to 1098 (AQSTLHSLSKWSSVTLLLALMLPSSSW) is removed in mature form.

Belongs to the immunoglobulin superfamily. Contactin family. As to quaternary structure, interacts with PTPRG. As to expression, expressed in the nervous system. Preferentially expressed in the central auditory pathways.

It is found in the cell membrane. Contactins mediate cell surface interactions during nervous system development. Has some neurite outgrowth-promoting activity in the cerebral cortical neurons but not in hippocampal neurons. Involved in neuronal activity in the auditory system. In Mus musculus (Mouse), this protein is Contactin-5 (Cntn5).